A 76-amino-acid chain; its full sequence is Antimicrobial peptide lumbricin-1 (76 aa).

Positions 1 to 14 (MSLCISDYLYLTLT) are cleaved as a propeptide — removed in mature form.

In terms of biological role, displays antimicrobial activity against the Gram-positive bacteria B.subtilis ATCC 62037, S.aureus ATCC 15752 and S.mutans ATCC 25175, the Gram-negative bacteria E.coli ATCC 27325, P.putida ATCC 17426 and Serratia sp. ATCC 21074, and the fungi C.albicans ATCC 10231, C.neoformans ATCC 34881 and S.cerevisiae ATCC 44774. Does not possess hemolytic activity. The chain is Antimicrobial peptide lumbricin-1 from Lumbricus rubellus (Humus earthworm).